We begin with the raw amino-acid sequence, 443 residues long: Signal recognition particle 54 kDa protein (443 aa).

Residues glycine 104–threonine 111, aspartate 184–arginine 188, and threonine 242–aspartate 245 each bind GTP.

It belongs to the GTP-binding SRP family. SRP54 subfamily. As to quaternary structure, part of the signal recognition particle protein translocation system, which is composed of SRP and FtsY. Archaeal SRP consists of a 7S RNA molecule of 300 nucleotides and two protein subunits: SRP54 and SRP19.

It is found in the cytoplasm. The enzyme catalyses GTP + H2O = GDP + phosphate + H(+). In terms of biological role, involved in targeting and insertion of nascent membrane proteins into the cytoplasmic membrane. Binds to the hydrophobic signal sequence of the ribosome-nascent chain (RNC) as it emerges from the ribosomes. The SRP-RNC complex is then targeted to the cytoplasmic membrane where it interacts with the SRP receptor FtsY. In Methanosarcina barkeri (strain Fusaro / DSM 804), this protein is Signal recognition particle 54 kDa protein.